Consider the following 138-residue polypeptide: MADDDDYQDMDNDDFVDDNEMEDVIEEEQQRPDHEEEDDDNNVDENFELFDQGKAVPTSEHVTTPFMTKYERARVLGTRALQIAMGAPVMVELEGETDPLEIARKELKQRRVPIIIRRYLPDGSYEDWPTEQLQLADW.

2 stretches are compositionally biased toward acidic residues: residues 1 to 27 (MADD…VIEE) and 35 to 46 (EEEDDDNNVDEN). The interval 1 to 46 (MADDDDYQDMDNDDFVDDNEMEDVIEEEQQRPDHEEEDDDNNVDEN) is disordered.

The protein belongs to the archaeal Rpo6/eukaryotic RPB6 RNA polymerase subunit family. In terms of assembly, component of the RNA polymerase I (Pol I), RNA polymerase II (Pol II) and RNA polymerase III (Pol III) complexes consisting of at least 13, 12 and 17 subunits, respectively.

It localises to the nucleus. Its function is as follows. DNA-dependent RNA polymerases catalyze the transcription of DNA into RNA using the four ribonucleoside triphosphates as substrates. Common component of RNA polymerases I, II and III which synthesize ribosomal RNA precursors, mRNA precursors and many functional non-coding RNAs, and small RNAs, such as 5S rRNA and tRNAs, respectively. Pol II is the central component of the basal RNA polymerase II transcription machinery. Pols are composed of mobile elements that move relative to each other. In Pol II, RPB6 is part of the clamp element and together with parts of RPB1 and RPB2 forms a pocket to which the RPB4-RPB7 subcomplex binds. This is Probable DNA-directed RNA polymerases I, II, and III subunit RPABC2 from Caenorhabditis briggsae.